A 213-amino-acid polypeptide reads, in one-letter code: StAR-related lipid transfer protein 5 (213 aa).

Positions 1 to 213 (MDPSWATQES…LQKAVRKFHH (213 aa)) constitute an START domain.

Expressed in most tissues, with highest levels in liver and in kidney.

May be involved in the intracellular transport of sterols or other lipids. May bind cholesterol or other sterols. The polypeptide is StAR-related lipid transfer protein 5 (Stard5) (Mus musculus (Mouse)).